The chain runs to 440 residues: UDP-N-acetylmuramoylalanine--D-glutamate ligase (440 aa).

Residue 115–121 (GSNGKST) coordinates ATP.

The protein belongs to the MurCDEF family.

It is found in the cytoplasm. It carries out the reaction UDP-N-acetyl-alpha-D-muramoyl-L-alanine + D-glutamate + ATP = UDP-N-acetyl-alpha-D-muramoyl-L-alanyl-D-glutamate + ADP + phosphate + H(+). It functions in the pathway cell wall biogenesis; peptidoglycan biosynthesis. Its function is as follows. Cell wall formation. Catalyzes the addition of glutamate to the nucleotide precursor UDP-N-acetylmuramoyl-L-alanine (UMA). The chain is UDP-N-acetylmuramoylalanine--D-glutamate ligase from Aliivibrio fischeri (strain MJ11) (Vibrio fischeri).